Consider the following 183-residue polypeptide: Capsid protein (183 aa).

The disordered stretch occupies residues 136-183; it reads NAPILSTLPETTVVRRRGRSPRRRTPSPRRRRSQSPRRRRSQSRESQC. Over residues 149–176 the composition is skewed to basic residues; it reads VRRRGRSPRRRTPSPRRRRSQSPRRRRS. Phosphoserine; by host is present on residues Ser155, Ser162, and Ser170. The stretch at 155-161 is one 1; half-length repeat; that stretch reads SPRRRTP. Residues 155-177 are 3 X 8 AA repeats of S-P-R-R-R-[PR]-S-Q; it reads SPRRRTPSPRRRRSQSPRRRRSQ. The Bipartite nuclear localization signal signature appears at 158–175; that stretch reads RRTPSPRRRRSQSPRRRR. Tandem repeats lie at residues 162-169 and 170-177. Positions 177-183 are RNA binding; sequence QSRESQC.

This sequence belongs to the orthohepadnavirus core antigen family. As to quaternary structure, homodimerizes, then multimerizes. Interacts with cytosol exposed regions of viral L glycoprotein present in the reticulum-to-Golgi compartment. Interacts with human FLNB. Phosphorylated form interacts with host importin alpha; this interaction depends on the exposure of the NLS, which itself depends upon genome maturation and/or phosphorylation of the capsid protein. Interacts with host NUP153. Phosphorylated by host SRPK1, SRPK2, and maybe protein kinase C or GAPDH. Phosphorylation is critical for pregenomic RNA packaging. Protein kinase C phosphorylation is stimulated by HBx protein and may play a role in transport of the viral genome to the nucleus at the late step during the viral replication cycle.

The protein localises to the virion. It is found in the host cytoplasm. Self assembles to form an icosahedral capsid. Most capsids appear to be large particles with an icosahedral symmetry of T=4 and consist of 240 copies of capsid protein, though a fraction forms smaller T=3 particles consisting of 180 capsid proteins. Entering capsids are transported along microtubules to the nucleus. Phosphorylation of the capsid is thought to induce exposure of nuclear localization signal in the C-terminal portion of the capsid protein that allows binding to the nuclear pore complex via the importin (karyopherin-) alpha and beta. Capsids are imported in intact form through the nuclear pore into the nuclear basket, where it probably binds NUP153. Only capsids that contain the mature viral genome can release the viral DNA and capsid protein into the nucleoplasm. Immature capsids get stuck in the basket. Capsids encapsulate the pre-genomic RNA and the P protein. Pre-genomic RNA is reverse-transcribed into DNA while the capsid is still in the cytoplasm. The capsid can then either be directed to the nucleus, providing more genomes for transcription, or bud through the endoplasmic reticulum to provide new virions. In Homo sapiens (Human), this protein is Capsid protein.